Consider the following 488-residue polypeptide: Diacylglycerol O-acyltransferase 1 (488 aa).

The tract at residues 1-57 (MGDRGSSRRRRTGSRPSSHGGGGPAAAEEEVRDAAAGPDVGAAGDAPAPAPNKDGDA) is disordered. Topologically, residues 1–83 (MGDRGSSRRR…SLFSSDSGFS (83 aa)) are cytoplasmic. The involved in homomerization stretch occupies residues 1–91 (MGDRGSSRRR…FSNYRGILNW (91 aa)). Ser17 and Ser18 each carry phosphoserine. The segment covering 34-47 (AAAGPDVGAAGDAP) has biased composition (low complexity). Residues 84–118 (NYRGILNWCVVMLILSNARLFLENLIKYGILVDPI) form a helical membrane-spanning segment. The Lumenal segment spans residues 119 to 130 (QVVSLFLKDPYS). Residues 119 to 130 (QVVSLFLKDPYS) form an extracellular loop 1 (EL1) region. A helical transmembrane segment spans residues 131–156 (WPAPCLVIAANVFAVAAFQVEKRLAV). Residues 131 to 488 (WPAPCLVIAA…LNYEAPAAEA (358 aa)) form an MBOAT fold region. Residues 157–161 (GALTE) lie on the Cytoplasmic side of the membrane. Residues 162 to 184 (QAGLLLHVANLATILCFPAAVVL) traverse the membrane as a helical segment. The Lumenal segment spans residues 185–191 (LVESITP). Residues 192-223 (VGSLLALMAHTILFLKLFSYRDVNSWCRRARA) form a helical membrane-spanning segment. Residues 224–273 (KAASAGKKASSAAAPHTVSYPDNLTYRDLYYFLFAPTLCYELNFPRSPRI) lie on the Cytoplasmic side of the membrane. The segment at 224 to 276 (KAASAGKKASSAAAPHTVSYPDNLTYRDLYYFLFAPTLCYELNFPRSPRIRKR) is intracellular loop 1 (IL1). The helical transmembrane segment at 274 to 308 (RKRFLLRRILEMLFFTQLQVGLIQQWMVPTIQNSM) threads the bilayer. The Lumenal portion of the chain corresponds to 309-315 (KPFKDMD). A helical transmembrane segment spans residues 316-353 (YSRIIERLLKLAVPNHLIWLIFFYWLFHSCLNAVAELM). Residues 354-399 (QFGDREFYRDWWNSESVTYFWQNWNIPVHKWCIRHFYKPMLRRGSS) are Cytoplasmic-facing. Residues 354-399 (QFGDREFYRDWWNSESVTYFWQNWNIPVHKWCIRHFYKPMLRRGSS) form an intracellular loop 2 (IL2) region. An FYXDWWN motif motif is present at residues 360–366 (FYRDWWN). Residues 374–382 (WQNWNIPVH), Tyr390, and Arg404 each bind an acyl-CoA. The interval 380–394 (PVHKWCIRHFYKPML) is amphipathic helix (AH). Residues 400–420 (KWMARTGVFLASAFFHEYLVS) form a helical membrane-spanning segment. The active site involves His415. At 421-428 (VPLRMFRL) the chain is on the lumenal side. A helical transmembrane segment spans residues 429-447 (WAFTGMMAQIPLAWFVGRF). The Cytoplasmic segment spans residues 448–449 (FQ). A helical transmembrane segment spans residues 450 to 481 (GNYGNAAVWLSLIIGQPIAVLMYVHDYYVLNY). Tyr477 is an an acyl-CoA binding site. At 482–488 (EAPAAEA) the chain is on the lumenal side.

This sequence belongs to the membrane-bound acyltransferase family. Sterol o-acyltransferase subfamily. In terms of assembly, homodimer or homotetramer; both forms have similar enzymatic activities.

It is found in the endoplasmic reticulum membrane. It catalyses the reaction an acyl-CoA + a 1,2-diacyl-sn-glycerol = a triacyl-sn-glycerol + CoA. It carries out the reaction all-trans-retinol + an acyl-CoA = an all-trans-retinyl ester + CoA. The catalysed reaction is 2-(9Z-octadecenoyl)-glycerol + (9Z)-octadecenoyl-CoA = 1,2-di-(9Z-octadecenoyl)-sn-glycerol + CoA. The enzyme catalyses 1,2-di-(9Z-octadecenoyl)-sn-glycerol + (9Z)-octadecenoyl-CoA = 1,2,3-tri-(9Z-octadecenoyl)-glycerol + CoA. It catalyses the reaction all-trans-retinol + hexadecanoyl-CoA = all-trans-retinyl hexadecanoate + CoA. It carries out the reaction 1-O-(9Z-octadecenyl)-glycerol + (9Z)-octadecenoyl-CoA = 1-O-(9Z-octadecyl)-3-(9Z-octadecenoyl)-glycerol + CoA. The catalysed reaction is 1-O-(9Z-octadecyl)-3-(9Z-octadecenoyl)-glycerol + (9Z)-octadecenoyl-CoA = 1-O-(9Z-octadecenyl)-2,3-di-(9Z-octadecenoyl)glycerol + CoA. The enzyme catalyses 1-(9Z-octadecenoyl)-glycerol + (9Z)-octadecenoyl-CoA = 1,2-di-(9Z-octadecenoyl)-glycerol + CoA. It catalyses the reaction 1,2-di-(9Z-octadecenoyl)-glycerol + (9Z)-octadecenoate + H(+) = 1,2,3-tri-(9Z-octadecenoyl)-glycerol + H2O. It carries out the reaction 1-octadecanoyl-2-(5Z,8Z,11Z,14Z-eicosatetraenoyl)-sn-glycerol + (9Z)-octadecenoyl-CoA = 1-octadecanoyl-2-(5Z,8Z,11Z,14Z)-eicosatetraenoyl-3-(9Z)-octadecenoyl-sn-glycerol + CoA. The catalysed reaction is hexadecane-1,2-diol + 2 hexadecanoyl-CoA = 1,2-O,O-dihexadecanoyl-1,2-hexadecanediol + 2 CoA. The enzyme catalyses hexadecane-1,2-diol + hexadecanoyl-CoA = 2-hydroxyhexadecyl hexadecanoate + CoA. It catalyses the reaction 2-(9Z-octadecenoyl)-glycerol + hexadecanoyl-CoA = 1-hexadecanoyl-2-(9Z-octadecenoyl)-sn-glycerol + CoA. It carries out the reaction 1,2-di-(9Z-octadecenoyl)-sn-glycerol + hexadecanoyl-CoA = 1,2-di-(9Z)-octadecenoyl-3-hexadecanoyl-sn-glycerol + CoA. The catalysed reaction is hexadecan-1-ol + hexadecanoyl-CoA = hexadecanyl hexadecanoate + CoA. The enzyme catalyses 13-cis-retinol + hexadecanoyl-CoA = 13-cis-retinyl hexadecanoate + CoA. It catalyses the reaction 1,3-di-(9Z-octadecenoyl)-glycerol + (9Z)-octadecenoyl-CoA = 1,2,3-tri-(9Z-octadecenoyl)-glycerol + CoA. It carries out the reaction 2,3-di-(9Z)-octadecenoyl-sn-glycerol + (9Z)-octadecenoyl-CoA = 1,2,3-tri-(9Z-octadecenoyl)-glycerol + CoA. The protein operates within lipid metabolism; glycerolipid metabolism. XP620 is a selective DGAT1 inhibitor. Its function is as follows. Catalyzes the terminal and only committed step in triacylglycerol synthesis by using diacylglycerol and fatty acyl CoA as substrates. Highly expressed in epithelial cells of the small intestine and its activity is essential for the absorption of dietary fats. In liver, plays a role in esterifying exogenous fatty acids to glycerol, and is required to synthesize fat for storage. Also present in female mammary glands, where it produces fat in the milk. May be involved in VLDL (very low density lipoprotein) assembly. In contrast to DGAT2 it is not essential for survival. Functions as the major acyl-CoA retinol acyltransferase (ARAT) in the skin, where it acts to maintain retinoid homeostasis and prevent retinoid toxicity leading to skin and hair disorders. Exhibits additional acyltransferase activities, includin acyl CoA:monoacylglycerol acyltransferase (MGAT), wax monoester and wax diester synthases. Also able to use 1-monoalkylglycerol (1-MAkG) as an acyl acceptor for the synthesis of monoalkyl-monoacylglycerol (MAMAG). The protein is Diacylglycerol O-acyltransferase 1 of Homo sapiens (Human).